The sequence spans 130 residues: Ion transport peptide (130 aa).

Disulfide bonds link Cys62–Cys98, Cys78–Cys94, and Cys81–Cys107. Leu127 bears the Leucine amide mark.

The protein belongs to the arthropod CHH/MIH/GIH/VIH hormone family. As to expression, brain and corpus cardiacum.

The protein resides in the secreted. Functionally, stimulates salt and water reabsorption and inhibits acid secretion in the ileum of S.gregaria. This is Ion transport peptide from Schistocerca gregaria (Desert locust).